Consider the following 185-residue polypeptide: Elongation factor P (185 aa).

The protein belongs to the elongation factor P family.

It localises to the cytoplasm. Its pathway is protein biosynthesis; polypeptide chain elongation. Functionally, involved in peptide bond synthesis. Stimulates efficient translation and peptide-bond synthesis on native or reconstituted 70S ribosomes in vitro. Probably functions indirectly by altering the affinity of the ribosome for aminoacyl-tRNA, thus increasing their reactivity as acceptors for peptidyl transferase. The sequence is that of Elongation factor P from Lachnoclostridium phytofermentans (strain ATCC 700394 / DSM 18823 / ISDg) (Clostridium phytofermentans).